A 151-amino-acid polypeptide reads, in one-letter code: Probable cGMP 3',5'-cyclic phosphodiesterase subunit delta (151 aa).

It belongs to the PDE6D/unc-119 family. In terms of assembly, interacts with Pde6.

It localises to the nucleus. The protein resides in the cytoplasm. This Drosophila persimilis (Fruit fly) protein is Probable cGMP 3',5'-cyclic phosphodiesterase subunit delta.